A 455-amino-acid polypeptide reads, in one-letter code: E3 ubiquitin-protein ligase IPI1 (455 aa).

The disordered stretch occupies residues 1–42 (MGAEEEEEPASAVGREGGGGGGGARAAGAGAGGDTADDDDSG). A compositionally biased stretch (gly residues) spans 15 to 33 (REGGGGGGGARAAGAGAGG). Residues 51-97 (CSICLDAVVAGGGDRSTARLQCGHEFHLDCIGSAFNAKGVMQCPNCR) form an RING-type; atypical zinc finger. Disordered regions lie at residues 286–311 (LDSD…SRIP) and 426–455 (QWIG…IPRM). Residues 433–442 (SPPPPPPPPA) show a composition bias toward pro residues.

As to quaternary structure, interacts with SPL14/IPA1.

The protein localises to the nucleus. It catalyses the reaction S-ubiquitinyl-[E2 ubiquitin-conjugating enzyme]-L-cysteine + [acceptor protein]-L-lysine = [E2 ubiquitin-conjugating enzyme]-L-cysteine + N(6)-ubiquitinyl-[acceptor protein]-L-lysine.. It functions in the pathway protein modification; protein ubiquitination. Its function is as follows. Functions as an E3 ligase that promotes polyubiquitination of SPL14/IPA1 for subsequent proteasomal degradation. Regulates plant architecture by modulating SPL14/IPA1 abundance. Promotes the degradation of SPL14/IPA1 in panicles, while it stabilizes SPL14/IPA1 in shoot apices. Ubiquitinates the SPL14/IPA1-mediated complex with 'Lys-48'-linked polyubiquitin in panicles and 'Lys-63'-linked polyubiquitin chains in the shoot apex. This Oryza sativa subsp. japonica (Rice) protein is E3 ubiquitin-protein ligase IPI1.